The following is a 218-amino-acid chain: Small ribosomal subunit protein uS3 (218 aa).

Residues 38–106 (IREYINKRLQ…RVHINIVEIK (69 aa)) form the KH type-2 domain.

The protein belongs to the universal ribosomal protein uS3 family. Part of the 30S ribosomal subunit. Forms a tight complex with proteins S10 and S14.

Functionally, binds the lower part of the 30S subunit head. Binds mRNA in the 70S ribosome, positioning it for translation. This chain is Small ribosomal subunit protein uS3, found in Geobacillus sp. (strain WCH70).